Reading from the N-terminus, the 126-residue chain is Phosphoribosyl-AMP cyclohydrolase (126 aa).

Residue Asp74 coordinates Mg(2+). Zn(2+) is bound at residue Cys75. Mg(2+)-binding residues include Asp76 and Asp78. Zn(2+)-binding residues include Cys92 and Cys99.

This sequence belongs to the PRA-CH family. In terms of assembly, homodimer. Mg(2+) is required as a cofactor. The cofactor is Zn(2+).

It localises to the cytoplasm. It carries out the reaction 1-(5-phospho-beta-D-ribosyl)-5'-AMP + H2O = 1-(5-phospho-beta-D-ribosyl)-5-[(5-phospho-beta-D-ribosylamino)methylideneamino]imidazole-4-carboxamide. It functions in the pathway amino-acid biosynthesis; L-histidine biosynthesis; L-histidine from 5-phospho-alpha-D-ribose 1-diphosphate: step 3/9. Catalyzes the hydrolysis of the adenine ring of phosphoribosyl-AMP. The protein is Phosphoribosyl-AMP cyclohydrolase of Geotalea daltonii (strain DSM 22248 / JCM 15807 / FRC-32) (Geobacter daltonii).